We begin with the raw amino-acid sequence, 261 residues long: UPF0328 protein ECU02_0020/ECU04_1700 (261 aa).

The interval Met-1–Ile-20 is disordered. The span at Glu-11–Ile-20 shows a compositional bias: basic and acidic residues.

The protein belongs to the UPF0328 family.

This is UPF0328 protein ECU02_0020/ECU04_1700 from Encephalitozoon cuniculi (strain GB-M1) (Microsporidian parasite).